The following is a 119-amino-acid chain: Phytosulfokines 2 (119 aa).

A signal peptide spans 1 to 34 (MSTTRGVSSSSAAAALALLLLFALCFFSFHSAAA). Positions 35–109 (ARAVPRDEHQ…RRLLSDAHLD (75 aa)) are excised as a propeptide. Residues Y110 and Y112 each carry the sulfotyrosine modification. Residues 115-119 (HKNKP) constitute a propeptide that is removed on maturation.

Belongs to the phytosulfokine family. Post-translationally, sulfation is important for activity and for the binding to a putative membrane receptor. In terms of processing, PSK-alpha is produced by endopeptidase digestion. PSK-beta is produced from PSK-alpha by exopeptidase digestion.

It is found in the secreted. Its function is as follows. Promotes plant cell differentiation, organogenesis and somatic embryogenesis as well as cell proliferation. This Oryza sativa subsp. indica (Rice) protein is Phytosulfokines 2 (PSK2).